The sequence spans 158 residues: Large ribosomal subunit protein mL50 (158 aa).

It belongs to the mitochondrion-specific ribosomal protein mL50 family. Component of the mitochondrial large ribosomal subunit (mt-LSU). Mature mammalian 55S mitochondrial ribosomes consist of a small (28S) and a large (39S) subunit. The 28S small subunit contains a 12S ribosomal RNA (12S mt-rRNA) and 30 different proteins. The 39S large subunit contains a 16S rRNA (16S mt-rRNA), a copy of mitochondrial valine transfer RNA (mt-tRNA(Val)), which plays an integral structural role, and 52 different proteins.

The protein resides in the mitochondrion. In Homo sapiens (Human), this protein is Large ribosomal subunit protein mL50 (MRPL50).